A 265-amino-acid chain; its full sequence is Methylthioribulose-1-phosphate dehydratase (265 aa).

Position 118 (Cys118) interacts with substrate. The Zn(2+) site is built by His136 and His138. The active-site Proton donor/acceptor is the Glu161. Position 226 (His226) interacts with Zn(2+).

It belongs to the aldolase class II family. MtnB subfamily. Zn(2+) is required as a cofactor.

The protein resides in the cytoplasm. It carries out the reaction 5-(methylsulfanyl)-D-ribulose 1-phosphate = 5-methylsulfanyl-2,3-dioxopentyl phosphate + H2O. It participates in amino-acid biosynthesis; L-methionine biosynthesis via salvage pathway; L-methionine from S-methyl-5-thio-alpha-D-ribose 1-phosphate: step 2/6. Catalyzes the dehydration of methylthioribulose-1-phosphate (MTRu-1-P) into 2,3-diketo-5-methylthiopentyl-1-phosphate (DK-MTP-1-P). This is Methylthioribulose-1-phosphate dehydratase from Scheffersomyces stipitis (strain ATCC 58785 / CBS 6054 / NBRC 10063 / NRRL Y-11545) (Yeast).